Reading from the N-terminus, the 167-residue chain is Ion-translocating oxidoreductase complex subunit B (167 aa).

Positions 1–22 are hydrophobic; sequence MITLIIFSFLSFLLGIILSFTA. The 4Fe-4S domain occupies 28 to 87; that stretch reads QEDPIVEIVNELLPQSQCAQCGYSGCYPYAKAIVENSEKINKCIPGGTDLISAISSVLSI. [4Fe-4S] cluster-binding residues include cysteine 45, cysteine 48, cysteine 53, cysteine 70, cysteine 113, cysteine 116, cysteine 119, cysteine 123, cysteine 143, cysteine 146, cysteine 149, and cysteine 153. 2 4Fe-4S ferredoxin-type domains span residues 104-133 and 134-163; these read NTVL…GAPN and FIHT…IKKE.

Belongs to the 4Fe4S bacterial-type ferredoxin family. RnfB subfamily. The complex is composed of six subunits: RnfA, RnfB, RnfC, RnfD, RnfE and RnfG. [4Fe-4S] cluster serves as cofactor.

Its subcellular location is the cell inner membrane. In terms of biological role, part of a membrane-bound complex that couples electron transfer with translocation of ions across the membrane. In Buchnera aphidicola subsp. Acyrthosiphon pisum (strain Tuc7), this protein is Ion-translocating oxidoreductase complex subunit B.